A 332-amino-acid chain; its full sequence is Ferredoxin--NADP reductase (332 aa).

Residues Glu36, Gln44, Tyr49, Val91, Phe124, and Thr327 each coordinate FAD.

This sequence belongs to the ferredoxin--NADP reductase type 2 family. In terms of assembly, homodimer. It depends on FAD as a cofactor.

It carries out the reaction 2 reduced [2Fe-2S]-[ferredoxin] + NADP(+) + H(+) = 2 oxidized [2Fe-2S]-[ferredoxin] + NADPH. This is Ferredoxin--NADP reductase from Streptococcus thermophilus (strain CNRZ 1066).